Here is a 308-residue protein sequence, read N- to C-terminus: Acetylglutamate kinase (308 aa).

Substrate-binding positions include 86 to 87 (GG), R108, and N201.

This sequence belongs to the acetylglutamate kinase family. ArgB subfamily.

It is found in the cytoplasm. It catalyses the reaction N-acetyl-L-glutamate + ATP = N-acetyl-L-glutamyl 5-phosphate + ADP. It participates in amino-acid biosynthesis; L-arginine biosynthesis; N(2)-acetyl-L-ornithine from L-glutamate: step 2/4. In terms of biological role, catalyzes the ATP-dependent phosphorylation of N-acetyl-L-glutamate. The protein is Acetylglutamate kinase of Prochlorococcus marinus (strain MIT 9313).